The sequence spans 355 residues: Alpha-N-acetylneuraminide alpha-2,8-sialyltransferase (355 aa).

Residues 1–28 (MSPCGRALHTSRGAMAMLARKFPRTRLP) lie on the Cytoplasmic side of the membrane. A helical; Signal-anchor for type II membrane protein transmembrane segment spans residues 29-47 (VGASALCVVVLCWLYIFPV). Residues 48-355 (YRLPNEKEIV…CEEPSPQPTS (308 aa)) are Lumenal-facing. 2 N-linked (GlcNAc...) asparagine glycosylation sites follow: Asn-70 and Asn-118. 2 disulfide bridges follow: Cys-137-Cys-286 and Cys-151-Cys-346. CMP-N-acetyl-beta-neuraminate contacts are provided by Asn-142 and Asn-165. 2 N-linked (GlcNAc...) asparagine glycosylation sites follow: Asn-213 and Asn-244. 5 residues coordinate CMP-N-acetyl-beta-neuraminate: Ser-273, Thr-274, Gly-275, Trp-295, and His-309. His-321 acts as the Proton donor/acceptor in catalysis.

Belongs to the glycosyltransferase 29 family.

It localises to the golgi apparatus membrane. It catalyses the reaction an N-acetyl-alpha-neuraminyl-(2-&gt;3)-beta-D-galactosyl derivative + CMP-N-acetyl-beta-neuraminate = an N-acetyl-alpha-neuraminyl-(2-&gt;8)-N-acetyl-alpha-neuraminyl-(2-&gt;3)-beta-D-galactosyl derivative + CMP + H(+). The enzyme catalyses a ganglioside GM3 (d18:1(4E)) + CMP-N-acetyl-beta-neuraminate = a ganglioside GD3 (d18:1(4E)) + CMP + H(+). The catalysed reaction is a ganglioside GD3 (d18:1(4E)) + CMP-N-acetyl-beta-neuraminate = a ganglioside GT3 (d18:1(4E)) + CMP + H(+). It carries out the reaction a ganglioside GD1a (d18:1(4E)) + CMP-N-acetyl-beta-neuraminate = a ganglioside GT1a (d18:1(4E)) + CMP + H(+). It catalyses the reaction a ganglioside GT1b (d18:1(4E)) + CMP-N-acetyl-beta-neuraminate = a ganglioside GQ1b (d18:1(4E)) + CMP + H(+). The enzyme catalyses a ganglioside GM1b (d18:1(4E)) + CMP-N-acetyl-beta-neuraminate = a ganglioside GD1c (d18:1(4E)) + CMP + H(+). The catalysed reaction is a ganglioside GD3 + CMP-N-acetyl-beta-neuraminate = a ganglioside GT3 + CMP + H(+). It carries out the reaction [alpha-N-acetylneuraminyl-(2-&gt;8)](n)-alpha-N-acetylneuraminyl-(2-&gt;8)-alpha-N-acetylneuraminyl-(2-&gt;3)-beta-D-galactosyl-(1-&gt;4)-beta-D-glucosyl-(1&lt;-&gt;1)-ceramide + CMP-N-acetyl-beta-neuraminate = [alpha-N-acetylneuraminyl-(2-&gt;8)](n+1)-alpha-N-acetylneuraminyl-(2-&gt;8)-alpha-N-acetylneuraminyl-(2-&gt;3)-beta-D-galactosyl-(1-&gt;4)-beta-D-glucosyl-(1&lt;-&gt;1)-ceramide + CMP + H(+). Its pathway is protein modification; protein glycosylation. The protein operates within lipid metabolism; sphingolipid metabolism. In terms of biological role, catalyzes the addition of sialic acid in alpha 2,8-linkage to the sialic acid moiety of the ganglioside GM3 to form ganglioside GD3; gangliosides are a subfamily of complex glycosphingolipds that contain one or more residues of sialic acid. Can catalyze the addition of a second alpha-2,8- sialic acid to GD3 to form GT3. Can use GM1b, GD1a and GT1b as acceptor substrates to synthesize GD1c, GT1a and GQ1b respectively. The polypeptide is Alpha-N-acetylneuraminide alpha-2,8-sialyltransferase (Mus musculus (Mouse)).